Reading from the N-terminus, the 478-residue chain is Glycogen synthase (478 aa).

K16 lines the ADP-alpha-D-glucose pocket.

The protein belongs to the glycosyltransferase 1 family. Bacterial/plant glycogen synthase subfamily.

The enzyme catalyses [(1-&gt;4)-alpha-D-glucosyl](n) + ADP-alpha-D-glucose = [(1-&gt;4)-alpha-D-glucosyl](n+1) + ADP + H(+). It functions in the pathway glycan biosynthesis; glycogen biosynthesis. Synthesizes alpha-1,4-glucan chains using ADP-glucose. The polypeptide is Glycogen synthase (Lachnoclostridium phytofermentans (strain ATCC 700394 / DSM 18823 / ISDg) (Clostridium phytofermentans)).